A 265-amino-acid chain; its full sequence is U6 snRNA phosphodiesterase 1 (265 aa).

Residues 1–72 (MSAAPLVGYS…DSTKHGGRVR (72 aa)) are disordered. Basic and acidic residues predominate over residues 20–31 (DGMRTRPGDGSH). His-120 acts as the Proton acceptor in catalysis. Residue 120 to 122 (HLS) participates in AMP binding. Residues Gln-164, Tyr-202, and 206–210 (SFHLS) each bind UMP. Residues Tyr-202 and 204–210 (DPSFHLS) each bind AMP. His-208 serves as the catalytic Proton donor.

It belongs to the 2H phosphoesterase superfamily. USB1 family. In terms of assembly, interacts with PLRG1, CDC5L and PRPF19.

The protein localises to the nucleus. It catalyses the reaction a 3'-end uridylyl-uridine-RNA = a 3'-end 2',3'-cyclophospho-uridine-RNA + uridine. It carries out the reaction a 3'-end uridylyl-adenosine-RNA = a 3'-end 2',3'-cyclophospho-uridine-RNA + adenosine. 3'-5' RNA exonuclease activity is inhibited by a 3' phosphate terminated RNA. Its function is as follows. 3'-5' RNA exonuclease that trims the 3' end of oligo(U) and oligo(A) tracts of the pre-U6 small nuclear RNA (snRNA) molecule, leading to the formation of a mature U6 snRNA 3' end-terminated with a 2',3'-cyclic phosphate. Participates in the U6 snRNA 3' end processing that prevents U6 snRNA degradation. In addition also removes uridines from the 3' end of U6atac snRNA and possibly the vault RNA VTRNA1-1. The protein is U6 snRNA phosphodiesterase 1 of Homo sapiens (Human).